Here is a 107-residue protein sequence, read N- to C-terminus: UPF0145 protein Ent638_1382 (107 aa).

This sequence belongs to the UPF0145 family.

The sequence is that of UPF0145 protein Ent638_1382 from Enterobacter sp. (strain 638).